The sequence spans 314 residues: Ribonuclease Z (314 aa).

Zn(2+) contacts are provided by His-63, His-65, Asp-67, His-68, His-142, Asp-205, and His-263. Asp-67 serves as the catalytic Proton acceptor.

Belongs to the RNase Z family. Homodimer. The cofactor is Zn(2+).

It carries out the reaction Endonucleolytic cleavage of RNA, removing extra 3' nucleotides from tRNA precursor, generating 3' termini of tRNAs. A 3'-hydroxy group is left at the tRNA terminus and a 5'-phosphoryl group is left at the trailer molecule.. In terms of biological role, zinc phosphodiesterase, which displays some tRNA 3'-processing endonuclease activity. Probably involved in tRNA maturation, by removing a 3'-trailer from precursor tRNA. In Kineococcus radiotolerans (strain ATCC BAA-149 / DSM 14245 / SRS30216), this protein is Ribonuclease Z.